Consider the following 217-residue polypeptide: Aminopyrimidine aminohydrolase (217 aa).

Aspartate 44 is a binding site for substrate. Cysteine 135 functions as the Nucleophile in the catalytic mechanism. Residues tyrosine 139 and tyrosine 165 each contribute to the substrate site. Catalysis depends on glutamate 207, which acts as the Proton donor.

The protein belongs to the TenA family. As to quaternary structure, homotetramer.

The enzyme catalyses 4-amino-5-aminomethyl-2-methylpyrimidine + H2O = 4-amino-5-hydroxymethyl-2-methylpyrimidine + NH4(+). Its pathway is cofactor biosynthesis; thiamine diphosphate biosynthesis. Its function is as follows. Catalyzes an amino-pyrimidine hydrolysis reaction at the C5' of the pyrimidine moiety of thiamine compounds to give a hydroxymethylpyrimidine (HMP). Displays low activity on 4-amino-5-aminomethyl-2-methylpyrimidine as substrate, indicating that the enzyme may act on a different HMP precursor that may derive from the human stomach food assumption or processing. Is probably involved in thiamine biosynthesis. Does not display thiaminase II activity, as it is unable to hydrolyze thiamine. This Helicobacter pylori (Campylobacter pylori) protein is Aminopyrimidine aminohydrolase.